Here is a 968-residue protein sequence, read N- to C-terminus: MDDSEVESTASILASVKEQEAQFEKLTRALEEERRHVSAQLERVRVSPQDANPLMANGTLTRRHQNGRFVGDADLERQKFSDLKLNGPQDHSHLLYSTIPRMQEPGQIVETYTEEDPEGAMSVVSVETSDDGTTRRTETTVKKVVKTVTTRTVQPVAMGPDGLPVDASSVSNNYIQTLGRDFRKNGNGGPGPYVGQAGTATLPRNFHYPPDGYSRHYEDGYPGGSDNYGSLSRVTRIEERYRPSMEGYRAPSRQDVYGPQPQVRVGGSSVDLHRFHPEPYGLEDDQRSMGYDDLDYGMMSDYGTARRTGTPSDPRRRLRSYEDMIGEEVPSDQYYWAPLAQHERGSLASLDSLRKGGPPPPNWRQPELPEVIAMLGFRLDAVKSNAAAYLQHLCYRNDKVKTDVRKLKGIPVLVGLLDHPKKEVHLGACGALKNISFGRDQDNKIAIKNCDGVPALVRLLRKARDMDLTEVITGTLWNLSSHDSIKMEIVDHALHALTDEVIIPHSGWEREPNEDCKPRHIEWESVLTNTAGCLRNVSSERSEARRKLRECDGLVDALIFIVQAEIGQKDSDSKLVENCVCLLRNLSYQVHREIPQAERYQEAAPNVANNTGPHAASCFGAKKGKDEWFSRGKKPIEDPANDTVDFPKRTSPARGYELLFQPEVVRIYISLLKESKTPAILEASAGAIQNLCAGRWTYGRYIRSALRQEKALSAIADLLTNEHERVVKAASGALRNLAVDARNKELIGKHAIPNLVKNLPGGQQNSSWNFSEDTVISILNTINEVIAENLEAAKKLRETQGIEKLVLINKSGNRSEKEVRAAALVLQTIWGYKELRKPLEKEGWKKSDFQVNLNNASRSQSSHSYDDSTLPLIDRNQKSDKKPDREEIQMSNMGSNTKSLDNNYSTPNERGDHNRTLDRSGDLGDMEPLKGTTPLMQDEGQESLEEELDVLVLDDEGGQVSYPSMQKI.

N-acetylmethionine is present on methionine 1. Positions 1–357 (MDDSEVESTA…ASLDSLRKGG (357 aa)) are necessary and sufficient for interaction with CCDC85B. Serine 4 carries the phosphoserine modification. A coiled-coil region spans residues 10-46 (ASILASVKEQEAQFEKLTRALEEERRHVSAQLERVRV). Residue serine 47 is modified to Phosphoserine. Threonine 59 carries the phosphothreonine modification. Tyrosine 112 carries the phosphotyrosine; by FYN modification. Serine 125 is modified (phosphoserine). 2 positions are modified to phosphotyrosine: tyrosine 217 and tyrosine 221. Position 225 is a phosphoserine (serine 225). Tyrosine 228 carries the phosphotyrosine modification. Phosphoserine occurs at positions 230 and 252. Phosphotyrosine is present on tyrosine 257. Residues serine 268 and serine 269 each carry the phosphoserine modification. Tyrosine 280 carries the post-translational modification Phosphotyrosine. Serine 288 carries the phosphoserine; by PAK5 modification. Position 291 is a phosphotyrosine (tyrosine 291). A Nuclear localization signal (NLS) motif is present at residues 299 to 306 (MSDYGTAR). Serine 300 is modified (phosphoserine). Residue threonine 304 is modified to Phosphothreonine. Phosphoserine occurs at positions 320, 346, 349, and 352. ARM repeat units follow at residues 358 to 395 (PPPPNWRQPELPEVIAMLGFRLDAVKSNAAAYLQHLCY), 398 to 437 (DKVKTDVRKLKGIPVLVGLLDHPKKEVHLGACGALKNISF), 441 to 475 (QDNKIAIKNCDGVPALVRLLRKARDMDLTEVITGT), and 476 to 516 (LWNL…NEDC). Lysine 421 is covalently cross-linked (Glycyl lysine isopeptide (Lys-Gly) (interchain with G-Cter in SUMO2)). Lysine 517 is covalently cross-linked (Glycyl lysine isopeptide (Lys-Gly) (interchain with G-Cter in SUMO2)). Residues 521–528 (IEWESVLT) carry the Nuclear localization signal (NLS) motif. ARM repeat units follow at residues 534–573 (LRNVSSERSEARRKLRECDGLVDALIFIVQAEIGQKDSDS), 583–624 (LRNL…AKKG), 653–693 (ARGY…NLCA), 700–739 (RYIRSALRQEKALSAIADLLTNEHERVVKAASGALRNLAV), 740–780 (DARN…SILN), and 781–826 (TINE…ALVL). 4 positions are modified to phosphothreonine: isoleucine 566, aspartate 572, serine 587, and glutamate 593. The Nuclear localization signal (NLS) motif lies at 568 to 575 (QKDSDSKL). Serine 617 bears the Phosphoserine mark. The Nuclear localization signal (NLS) motif lies at 622–629 (KKGKDEWF). Phosphoserine is present on serine 713. 3 positions are modified to phosphothreonine: glutamate 788, lysine 794, and asparagine 809. Residue serine 811 is modified to Phosphoserine. A phosphothreonine mark is found at serine 815, leucine 835, and lysine 841. Position 847 is a phosphoserine (serine 847). The interval 855 to 944 (NASRSQSSHS…LMQDEGQESL (90 aa)) is disordered. Alanine 856 bears the Phosphothreonine mark. Phosphoserine is present on residues serine 857, serine 859, and serine 861. A Phosphothreonine modification is found at serine 862. A Phosphoserine modification is found at serine 864. Phosphotyrosine is present on tyrosine 865. Serine 868 carries the phosphoserine modification. Threonine 869 is modified (phosphothreonine). Over residues 875 to 888 (RNQKSDKKPDREEI) the composition is skewed to basic and acidic residues. Residue serine 879 is modified to Phosphoserine. A Glycyl lysine isopeptide (Lys-Gly) (interchain with G-Cter in SUMO2) cross-link involves residue lysine 882. Phosphothreonine is present on residues glutamine 889 and serine 895. Positions 889 to 908 (QMSNMGSNTKSLDNNYSTPN) are enriched in polar residues. Phosphoserine is present on serine 899. Residue tyrosine 904 is modified to Phosphotyrosine. Phosphothreonine is present on residues threonine 906, arginine 910, and threonine 916. The segment covering 909–922 (ERGDHNRTLDRSGD) has biased composition (basic and acidic residues). Residues serine 920 and serine 943 each carry the phosphoserine modification.

Belongs to the beta-catenin family. As to quaternary structure, belongs to a multiprotein cell-cell adhesion complex that also contains E-cadherin/CDH1, alpha-catenin/CTNNA1, beta-catenin/CTNNB1, and gamma-catenin/JUP. Component of a cadherin:catenin adhesion complex composed of at least of CDH26, beta-catenin/CTNNB1, alpha-catenin/CTNNA1 and p120 catenin/CTNND1. Binds to the C-terminal fragment of PSEN1 and mutually competes for CDH1. Interacts with ZBTB33. Interacts with GLIS2. Interacts with FER. Interacts with NANOS1 (via N-terminal region). Interacts (via N-terminus) with GNA12; the interaction regulates CDH1-mediated cell-cell adhesion. Interacts with GNA13. Interacts with CCDC85B. Interacts with PLPP3; negatively regulates the PLPP3-mediated stabilization of CTNNB1. Interacts with DSG3; the interaction facilitates DSG3 localization and retention at cell-cell junctions. Interacts with CTNND1/p120-catenin; the interaction controls CADH5 endocytosis. Post-translationally, phosphorylated by FER and other protein-tyrosine kinases. Phosphorylated at Ser-288 by PAK5. Dephosphorylated by PTPRJ. As to expression, expressed in vascular endothelium. Melanocytes and melanoma cells primarily express the long isoform 1A, whereas keratinocytes express shorter isoforms, especially 3A. The shortest isoform 4A, is detected in normal keratinocytes and melanocytes, and generally lost from cells derived from squamous cell carcinomas or melanomas. The C-terminal alternatively spliced exon B is present in the p120ctn transcripts in the colon, intestine and prostate, but lost in several tumor tissues derived from these organs.

The protein resides in the cell junction. Its subcellular location is the adherens junction. The protein localises to the cytoplasm. It is found in the nucleus. It localises to the cell membrane. Functionally, key regulator of cell-cell adhesion that associates with and regulates the cell adhesion properties of both C-, E- and N-cadherins, being critical for their surface stability. Promotes localization and retention of DSG3 at cell-cell junctions, via its interaction with DSG3. Beside cell-cell adhesion, regulates gene transcription through several transcription factors including ZBTB33/Kaiso2 and GLIS2, and the activity of Rho family GTPases and downstream cytoskeletal dynamics. Implicated both in cell transformation by SRC and in ligand-induced receptor signaling through the EGF, PDGF, CSF-1 and ERBB2 receptors. This chain is Catenin delta-1, found in Homo sapiens (Human).